Reading from the N-terminus, the 423-residue chain is L-cysteine:1D-myo-inositol 2-amino-2-deoxy-alpha-D-glucopyranoside ligase (423 aa).

Cys-43 is a binding site for Zn(2+). Residues 43 to 46 (CGIT), Thr-58, and 81 to 83 (NVT) each bind L-cysteinyl-5'-AMP. A 'HIGH' region motif is present at residues 45–55 (ITPYDATHMGH). The short motif at 199–204 (ERGGDP) is the 'ERGGDP' region element. Trp-240 is a binding site for L-cysteinyl-5'-AMP. A Zn(2+)-binding site is contributed by Cys-244. 262 to 264 (GSD) contributes to the L-cysteinyl-5'-AMP binding site. His-269 is a Zn(2+) binding site. Val-295 serves as a coordination point for L-cysteinyl-5'-AMP. The 'KMSKS' region signature appears at 301–305 (KMSKS).

Belongs to the class-I aminoacyl-tRNA synthetase family. MshC subfamily. As to quaternary structure, monomer. Requires Zn(2+) as cofactor.

It catalyses the reaction 1D-myo-inositol 2-amino-2-deoxy-alpha-D-glucopyranoside + L-cysteine + ATP = 1D-myo-inositol 2-(L-cysteinylamino)-2-deoxy-alpha-D-glucopyranoside + AMP + diphosphate + H(+). In terms of biological role, catalyzes the ATP-dependent condensation of GlcN-Ins and L-cysteine to form L-Cys-GlcN-Ins. The sequence is that of L-cysteine:1D-myo-inositol 2-amino-2-deoxy-alpha-D-glucopyranoside ligase from Renibacterium salmoninarum (strain ATCC 33209 / DSM 20767 / JCM 11484 / NBRC 15589 / NCIMB 2235).